A 335-amino-acid polypeptide reads, in one-letter code: Glyceraldehyde-3-phosphate dehydrogenase (335 aa).

Residues 13–14 (TI) and Gly111 each bind NAD(+). 140 to 142 (SCN) provides a ligand contact to D-glyceraldehyde 3-phosphate. Cys141 serves as the catalytic Nucleophile. Arg169 lines the NAD(+) pocket. D-glyceraldehyde 3-phosphate-binding positions include Thr171 and 195 to 196 (HG). NAD(+) is bound at residue Gln300.

This sequence belongs to the glyceraldehyde-3-phosphate dehydrogenase family. Homotetramer.

The protein resides in the cytoplasm. The enzyme catalyses D-glyceraldehyde 3-phosphate + phosphate + NADP(+) = (2R)-3-phospho-glyceroyl phosphate + NADPH + H(+). It catalyses the reaction D-glyceraldehyde 3-phosphate + phosphate + NAD(+) = (2R)-3-phospho-glyceroyl phosphate + NADH + H(+). It participates in carbohydrate degradation; glycolysis; pyruvate from D-glyceraldehyde 3-phosphate: step 1/5. The chain is Glyceraldehyde-3-phosphate dehydrogenase from Methanosarcina mazei (strain ATCC BAA-159 / DSM 3647 / Goe1 / Go1 / JCM 11833 / OCM 88) (Methanosarcina frisia).